Reading from the N-terminus, the 463-residue chain is Ribulose bisphosphate carboxylase large chain (463 aa).

Lys5 is modified (N6,N6,N6-trimethyllysine). Substrate-binding residues include Asn114 and Thr164. The Proton acceptor role is filled by Lys166. Lys168 provides a ligand contact to substrate. Mg(2+) is bound by residues Lys192, Asp194, and Glu195. Position 192 is an N6-carboxylysine (Lys192). His285 acts as the Proton acceptor in catalysis. Residues Arg286, His318, and Ser370 each contribute to the substrate site.

It belongs to the RuBisCO large chain family. Type I subfamily. In terms of assembly, heterohexadecamer of 8 large chains and 8 small chains; disulfide-linked. The disulfide link is formed within the large subunit homodimers. Mg(2+) serves as cofactor. Post-translationally, the disulfide bond which can form in the large chain dimeric partners within the hexadecamer appears to be associated with oxidative stress and protein turnover.

The protein localises to the plastid. The protein resides in the chloroplast. The catalysed reaction is 2 (2R)-3-phosphoglycerate + 2 H(+) = D-ribulose 1,5-bisphosphate + CO2 + H2O. The enzyme catalyses D-ribulose 1,5-bisphosphate + O2 = 2-phosphoglycolate + (2R)-3-phosphoglycerate + 2 H(+). RuBisCO catalyzes two reactions: the carboxylation of D-ribulose 1,5-bisphosphate, the primary event in carbon dioxide fixation, as well as the oxidative fragmentation of the pentose substrate in the photorespiration process. Both reactions occur simultaneously and in competition at the same active site. The sequence is that of Ribulose bisphosphate carboxylase large chain from Pelargonium grandiflorum (Geranium).